The chain runs to 298 residues: Nucleotide-binding protein MAV_3359 (298 aa).

18-25 (GLSGAGRG) contributes to the ATP binding site. 69–72 (DVRS) provides a ligand contact to GTP.

It belongs to the RapZ-like family.

Its function is as follows. Displays ATPase and GTPase activities. The protein is Nucleotide-binding protein MAV_3359 of Mycobacterium avium (strain 104).